A 154-amino-acid polypeptide reads, in one-letter code: Aspartate carbamoyltransferase regulatory chain (154 aa).

Zn(2+) contacts are provided by Cys111, Cys116, Cys139, and Cys142.

It belongs to the PyrI family. Contains catalytic and regulatory chains. Zn(2+) serves as cofactor.

Its function is as follows. Involved in allosteric regulation of aspartate carbamoyltransferase. The chain is Aspartate carbamoyltransferase regulatory chain from Parabacteroides distasonis (strain ATCC 8503 / DSM 20701 / CIP 104284 / JCM 5825 / NCTC 11152).